The chain runs to 377 residues: Histone deacetylase 8 (377 aa).

Positions 14–324 (LPPVYIYSPE…WTYLTGVILG (311 aa)) are histone deacetylase. S39 carries the phosphoserine modification. D101 lines the substrate pocket. H143 functions as the Proton acceptor in the catalytic mechanism. G151 lines the substrate pocket. Residues D178, H180, and D267 each coordinate a divalent metal cation. Y306 serves as a coordination point for substrate.

Belongs to the histone deacetylase family. HD type 1 subfamily. Interacts with CBFA2T3. Interacts with phosphorylated SMG5/EST1B; this interaction protects SMG5 from ubiquitin-mediated degradation. Associates with alpha-SMA (smooth muscle alpha-actin). Requires a divalent metal cation as cofactor. Post-translationally, phosphorylated by PKA on serine 39. Phosphorylation reduces deacetylase activity observed preferentially on histones H3 and H4.

The protein resides in the nucleus. It is found in the chromosome. The protein localises to the cytoplasm. The enzyme catalyses N(6)-acetyl-L-lysyl-[histone] + H2O = L-lysyl-[histone] + acetate. The catalysed reaction is N(6)-acetyl-L-lysyl-[protein] + H2O = L-lysyl-[protein] + acetate. It carries out the reaction N(6)-(2E)-butenoyl-L-lysyl-[protein] + H2O = (2E)-2-butenoate + L-lysyl-[protein]. Its activity is inhibited by trichostatin A (TSA) and butyrate, 2 well known histone deacetylase inhibitors. Functionally, histone deacetylase that catalyzes the deacetylation of lysine residues on the N-terminal part of the core histones (H2A, H2B, H3 and H4). Histone deacetylation gives a tag for epigenetic repression and plays an important role in transcriptional regulation, cell cycle progression and developmental events. Histone deacetylases act via the formation of large multiprotein complexes. Also involved in the deacetylation of cohesin complex protein SMC3 regulating release of cohesin complexes from chromatin. May play a role in smooth muscle cell contractility. In addition to protein deacetylase activity, also has protein-lysine deacylase activity: acts as a protein decrotonylase by mediating decrotonylation ((2E)-butenoyl) of histones. The protein is Histone deacetylase 8 (Hdac8) of Rattus norvegicus (Rat).